Reading from the N-terminus, the 428-residue chain is Histidinol dehydrogenase (428 aa).

Y126, Q188, and N211 together coordinate NAD(+). Residues S234, Q256, and H259 each coordinate substrate. Zn(2+)-binding residues include Q256 and H259. Active-site proton acceptor residues include E324 and H325. H325, D358, E412, and H417 together coordinate substrate. D358 provides a ligand contact to Zn(2+). H417 contacts Zn(2+).

The protein belongs to the histidinol dehydrogenase family. It depends on Zn(2+) as a cofactor.

The enzyme catalyses L-histidinol + 2 NAD(+) + H2O = L-histidine + 2 NADH + 3 H(+). Its pathway is amino-acid biosynthesis; L-histidine biosynthesis; L-histidine from 5-phospho-alpha-D-ribose 1-diphosphate: step 9/9. Functionally, catalyzes the sequential NAD-dependent oxidations of L-histidinol to L-histidinaldehyde and then to L-histidine. This chain is Histidinol dehydrogenase, found in Chlorobaculum tepidum (strain ATCC 49652 / DSM 12025 / NBRC 103806 / TLS) (Chlorobium tepidum).